Here is a 177-residue protein sequence, read N- to C-terminus: Large ribosomal subunit protein uL6 (177 aa).

The protein belongs to the universal ribosomal protein uL6 family. Part of the 50S ribosomal subunit.

This protein binds to the 23S rRNA, and is important in its secondary structure. It is located near the subunit interface in the base of the L7/L12 stalk, and near the tRNA binding site of the peptidyltransferase center. The chain is Large ribosomal subunit protein uL6 from Rhizorhabdus wittichii (strain DSM 6014 / CCUG 31198 / JCM 15750 / NBRC 105917 / EY 4224 / RW1) (Sphingomonas wittichii).